A 115-amino-acid chain; its full sequence is Holo-[acyl-carrier-protein] synthase (115 aa).

Positions 8 and 50 each coordinate Mg(2+).

The protein belongs to the P-Pant transferase superfamily. AcpS family. Mg(2+) is required as a cofactor.

Its subcellular location is the cytoplasm. The enzyme catalyses apo-[ACP] + CoA = holo-[ACP] + adenosine 3',5'-bisphosphate + H(+). Its function is as follows. Transfers the 4'-phosphopantetheine moiety from coenzyme A to a Ser of acyl-carrier-protein. This Renibacterium salmoninarum (strain ATCC 33209 / DSM 20767 / JCM 11484 / NBRC 15589 / NCIMB 2235) protein is Holo-[acyl-carrier-protein] synthase.